We begin with the raw amino-acid sequence, 88 residues long: Kunitz-type U15-theraphotoxin-Hhn1c (88 aa).

A signal peptide spans 1–27 (MGTARFLRAVLLLSVLLMVTFPALLSA). Positions 28-33 (EHHDGR) are excised as a propeptide. The BPTI/Kunitz inhibitor domain occupies 37 to 85 (CRLPSDSGDCLRFFEVWYFDGTTCTKFVYGGYGGNDNRFPTEKACMKRC). Intrachain disulfides connect C37-C85 and C60-C81.

The protein belongs to the venom Kunitz-type family. 03 (sub-Kunitz) subfamily. Expressed by the venom gland.

The protein localises to the secreted. Functionally, serine protease inhibitor that inhibits trypsin at a molar ratio of 1:1. This chain is Kunitz-type U15-theraphotoxin-Hhn1c, found in Cyriopagopus hainanus (Chinese bird spider).